The primary structure comprises 340 residues: Serpentine receptor class alpha-18 (340 aa).

6 consecutive transmembrane segments (helical) span residues 29 to 49, 109 to 129, 149 to 169, 198 to 218, 249 to 269, and 285 to 305; these read FNFI…WLAI, VFEL…VFSL, FIAT…FYIV, VRTG…YVCV, ISIV…NLLI, and IVSF…VIYF.

It belongs to the nematode receptor-like protein sra family.

It localises to the membrane. In Caenorhabditis elegans, this protein is Serpentine receptor class alpha-18 (sra-18).